The primary structure comprises 923 residues: Alanine--tRNA ligase (923 aa).

4 residues coordinate Zn(2+): histidine 611, histidine 615, cysteine 714, and histidine 718.

This sequence belongs to the class-II aminoacyl-tRNA synthetase family. The cofactor is Zn(2+).

The protein localises to the cytoplasm. It carries out the reaction tRNA(Ala) + L-alanine + ATP = L-alanyl-tRNA(Ala) + AMP + diphosphate. Functionally, catalyzes the attachment of alanine to tRNA(Ala) in a two-step reaction: alanine is first activated by ATP to form Ala-AMP and then transferred to the acceptor end of tRNA(Ala). Also edits incorrectly charged Ser-tRNA(Ala) and Gly-tRNA(Ala) via its editing domain. The polypeptide is Alanine--tRNA ligase (Methanosarcina barkeri (strain Fusaro / DSM 804)).